The primary structure comprises 345 residues: Fructose-1,6-bisphosphatase class 1 2 (345 aa).

Residues Glu-90, Asp-109, Leu-111, and Asp-112 each coordinate Mg(2+). Residues 112–115 and Asn-200 each bind substrate; that span reads DGSS. Position 272 (Glu-272) interacts with Mg(2+).

The protein belongs to the FBPase class 1 family. In terms of assembly, homotetramer. The cofactor is Mg(2+).

Its subcellular location is the cytoplasm. The catalysed reaction is beta-D-fructose 1,6-bisphosphate + H2O = beta-D-fructose 6-phosphate + phosphate. The protein operates within carbohydrate biosynthesis; gluconeogenesis. The sequence is that of Fructose-1,6-bisphosphatase class 1 2 from Nitrobacter hamburgensis (strain DSM 10229 / NCIMB 13809 / X14).